Here is a 495-residue protein sequence, read N- to C-terminus: Angiopoietin-2 (495 aa).

The signal sequence occupies residues 1–18 (MWQIVFFTLSCDLVRAAA). N-linked (GlcNAc...) asparagine glycans are attached at residues asparagine 88, asparagine 118, asparagine 132, asparagine 150, asparagine 239, and asparagine 303. The stretch at 165-247 (STNKLEKQIL…VNNSVLQKQQ (83 aa)) forms a coiled coil. Residues 274-494 (KEEQIIYRDC…GTTMMIRPAD (221 aa)) form the Fibrinogen C-terminal domain. Cysteine 283 and cysteine 312 are disulfide-bonded. Ca(2+) contacts are provided by aspartate 428, aspartate 430, cysteine 432, and cysteine 434. Cystine bridges form between cysteine 432–cysteine 434 and cysteine 436–cysteine 449.

In terms of assembly, interacts with TEK/TIE2, competing for the same binding site as ANGPT1. Interacts with ITGA5. Interacts with SVEP1/polydom. Interacts with THBD; this interaction significantly inhibits the generation of activated PC and TAFIa/CPB2 by the thrombin/thrombomodulin complex.

It is found in the secreted. Binds to TEK/TIE2, competing for the ANGPT1 binding site, and modulating ANGPT1 signaling. Can induce tyrosine phosphorylation of TEK/TIE2 in the absence of ANGPT1. In the absence of angiogenic inducers, such as VEGF, ANGPT2-mediated loosening of cell-matrix contacts may induce endothelial cell apoptosis with consequent vascular regression. In concert with VEGF, it may facilitate endothelial cell migration and proliferation, thus serving as a permissive angiogenic signal. Involved in the regulation of lymphangiogenesis. The protein is Angiopoietin-2 (ANGPT2) of Canis lupus familiaris (Dog).